A 133-amino-acid polypeptide reads, in one-letter code: uncharacterized protein (133 aa).

The segment at 44-79 is disordered; it reads VENQLASSKTEEQTLKISKKSNLNPAQKSSTFGLEN. Residues 63–79 are compositionally biased toward polar residues; that stretch reads KSNLNPAQKSSTFGLEN.

The protein localises to the plastid. It is found in the chloroplast. This is an uncharacterized protein from Chlorella vulgaris (Green alga).